The chain runs to 433 residues: tRNA-2-methylthio-N(6)-dimethylallyladenosine synthase (433 aa).

Positions 3 to 118 constitute an MTTase N-terminal domain; it reads KKLFIQTLGC…ITKAVNTPKF (116 aa). [4Fe-4S] cluster is bound by residues Cys-12, Cys-49, Cys-81, Cys-150, Cys-154, and Cys-157. Residues 136 to 369 enclose the Radical SAM core domain; sequence RGSPYKSHIN…QNRHSEILDE (234 aa). Residues 372 to 433 form the TRAM domain; the sequence is AAQKDKIFDV…RMVLYGELQI (62 aa).

The protein belongs to the methylthiotransferase family. MiaB subfamily. As to quaternary structure, monomer. It depends on [4Fe-4S] cluster as a cofactor.

The protein resides in the cytoplasm. It carries out the reaction N(6)-dimethylallyladenosine(37) in tRNA + (sulfur carrier)-SH + AH2 + 2 S-adenosyl-L-methionine = 2-methylsulfanyl-N(6)-dimethylallyladenosine(37) in tRNA + (sulfur carrier)-H + 5'-deoxyadenosine + L-methionine + A + S-adenosyl-L-homocysteine + 2 H(+). Functionally, catalyzes the methylthiolation of N6-(dimethylallyl)adenosine (i(6)A), leading to the formation of 2-methylthio-N6-(dimethylallyl)adenosine (ms(2)i(6)A) at position 37 in tRNAs that read codons beginning with uridine. In Campylobacter concisus (strain 13826), this protein is tRNA-2-methylthio-N(6)-dimethylallyladenosine synthase.